The following is a 752-amino-acid chain: Catalase-peroxidase (752 aa).

The tract at residues 1-21 (MSNESKCPFHQTAGGGTTNRD) is disordered. The segment at residues 91–245 (WHSAGTYRIG…LAAVQMGLIY (155 aa)) is a cross-link (tryptophyl-tyrosyl-methioninium (Trp-Tyr) (with M-271)). His-92 (proton acceptor) is an active-site residue. Positions 204-228 (QAPGQGDLVAEPAKHGEEQNRDLSA) are disordered. The span at 215 to 228 (PAKHGEEQNRDLSA) shows a compositional bias: basic and acidic residues. Residues 245 to 271 (YVNPEGPEGNPDPVASGKDIRETFGRM) constitute a cross-link (tryptophyl-tyrosyl-methioninium (Tyr-Met) (with W-91)). Position 286 (His-286) interacts with heme. Residues 366–391 (AHQWQPKEGKGAGTVPDAHDPSKRHA) are disordered.

Belongs to the peroxidase family. Peroxidase/catalase subfamily. As to quaternary structure, homodimer or homotetramer. Heme b is required as a cofactor. In terms of processing, formation of the three residue Trp-Tyr-Met cross-link is important for the catalase, but not the peroxidase activity of the enzyme.

It carries out the reaction H2O2 + AH2 = A + 2 H2O. The enzyme catalyses 2 H2O2 = O2 + 2 H2O. In terms of biological role, bifunctional enzyme with both catalase and broad-spectrum peroxidase activity. The sequence is that of Catalase-peroxidase from Pseudomonas putida (strain W619).